A 172-amino-acid polypeptide reads, in one-letter code: Water stress-inducible protein Rab21 (172 aa).

The interval 1 to 172 (MEHQGQHGHV…KIKEKLPGQH (172 aa)) is disordered. The Type A repeat unit spans residues 3-28 (HQGQHGHVTSRVDEYGNPVGTGAGHG). Residues 21 to 65 (VGTGAGHGQMGTAGMGTHGTTGGMGTHGTTGGMGTHGTTGTGGGQ) show a composition bias toward gly residues. One copy of the Type B repeat lies at 98 to 115 (RRKKGIKEKIKEKLPGGN). Residues 124 to 139 (GGTGGAYGQQGHGTGM) are compositionally biased toward gly residues. One copy of the Type A repeat lies at 125–149 (GTGGAYGQQGHGTGMTTGTTGAHGT). Residues 140–153 (TTGTTGAHGTTTTD) show a composition bias toward low complexity. Over residues 154–172 (TGEKKGIMDKIKEKLPGQH) the composition is skewed to basic and acidic residues. The stretch at 156-172 (EKKGIMDKIKEKLPGQH) is one Type B repeat.

It belongs to the plant dehydrin family.

The protein localises to the cytoplasm. This chain is Water stress-inducible protein Rab21 (RAB21), found in Oryza sativa subsp. indica (Rice).